The primary structure comprises 234 residues: Phosphoribosylaminoimidazole-succinocarboxamide synthase (234 aa).

Belongs to the SAICAR synthetase family.

The enzyme catalyses 5-amino-1-(5-phospho-D-ribosyl)imidazole-4-carboxylate + L-aspartate + ATP = (2S)-2-[5-amino-1-(5-phospho-beta-D-ribosyl)imidazole-4-carboxamido]succinate + ADP + phosphate + 2 H(+). It functions in the pathway purine metabolism; IMP biosynthesis via de novo pathway; 5-amino-1-(5-phospho-D-ribosyl)imidazole-4-carboxamide from 5-amino-1-(5-phospho-D-ribosyl)imidazole-4-carboxylate: step 1/2. This Streptococcus agalactiae serotype V (strain ATCC BAA-611 / 2603 V/R) protein is Phosphoribosylaminoimidazole-succinocarboxamide synthase.